Consider the following 250-residue polypeptide: uncharacterized protein (250 aa).

Basic and acidic residues predominate over residues 207–226 (LNDRDAINKSEEARKAREEV). A disordered region spans residues 207 to 250 (LNDRDAINKSEEARKAREEVFIPSEPSKPSIASKRSSASKSTKS). The span at 233-250 (SKPSIASKRSSASKSTKS) shows a compositional bias: low complexity.

The protein localises to the plastid. It is found in the chloroplast. This is an uncharacterized protein from Chlorella vulgaris (Green alga).